The chain runs to 292 residues: ATP synthase gamma chain (292 aa).

The protein belongs to the ATPase gamma chain family. In terms of assembly, F-type ATPases have 2 components, CF(1) - the catalytic core - and CF(0) - the membrane proton channel. CF(1) has five subunits: alpha(3), beta(3), gamma(1), delta(1), epsilon(1). CF(0) has three main subunits: a, b and c.

Its subcellular location is the cell membrane. In terms of biological role, produces ATP from ADP in the presence of a proton gradient across the membrane. The gamma chain is believed to be important in regulating ATPase activity and the flow of protons through the CF(0) complex. This chain is ATP synthase gamma chain, found in Streptococcus pneumoniae serotype 2 (strain D39 / NCTC 7466).